The primary structure comprises 295 residues: CCAAT-binding factor complex subunit php4 (295 aa).

The segment covering 1–19 (MESSKSPSEVEKSSSASPA) has biased composition (low complexity). Positions 1-69 (MESSKSPSEV…GPTSALSVEE (69 aa)) are disordered. Residues 73-111 (RVREKQYQDTIGKLQKENNELLEQLEMLQAQLKNSTLDS) adopt a coiled-coil conformation. Positions 93–100 (LLEQLEML) match the Nuclear export signal motif. A disordered region spans residues 108–130 (TLDSPKEVEVNSEVVKPDSATTE).

Component of tha CCAAT-binding complex composed of at least php2, php3, php4 and php5. Interacts with crm1 and grx4.

The protein resides in the cytoplasm. It is found in the nucleus. Its subcellular location is the cytoskeleton. The protein localises to the spindle pole. Component of the transcription regulatory CCAAT-binding complex. Required for the reprogramming of the cell for iron use. Down-regulates pcl1, sdh4, and isa1 underlow-iron conditions. This Schizosaccharomyces pombe (strain 972 / ATCC 24843) (Fission yeast) protein is CCAAT-binding factor complex subunit php4 (php4).